The following is a 176-amino-acid chain: Large ribosomal subunit protein eL20 (176 aa).

The protein belongs to the eukaryotic ribosomal protein eL20 family. Component of the large ribosomal subunit.

Its subcellular location is the cytoplasm. Component of the large ribosomal subunit. The ribosome is a large ribonucleoprotein complex responsible for the synthesis of proteins in the cell. This Ictalurus punctatus (Channel catfish) protein is Large ribosomal subunit protein eL20 (rpl18a).